Here is a 337-residue protein sequence, read N- to C-terminus: MPNFSFVFFYDSAKITPISTALLGRRMNYLKIAQDSLSVESNALLQLSQRLGDDFNQVIDLILACEGRLVIGGIGKSGLIGKKMVATFASTGTPSFFLHPTEAFHGDLGMLKPIDIVMLISYSGETDDVNKLIPSLKNFGNKIIAVTSNKNSTLARHADYVLDITVEREVCPNNLAPTTSALVTLALGDALAVSLITARNFQPADFAKFHPGGSLGRRLLCKVKDQMQTRLPTILPTTNFTDCLTVMNEGRMGVALVMENEQLKGIITDGDIRRALTANGAGTLNKTAKDFMTSSPKTIHQDEFLSKAEDFMKAKKIHSLVVVNDENHVVGLVEFSS.

One can recognise an SIS domain in the interval 58–201 (VIDLILACEG…AVSLITARNF (144 aa)). Substrate is bound by residues 92–93 (GT), histidine 99, histidine 105, 131–140 (KLIPSLKNFG), 165–167 (TVE), threonine 237, and aspartate 290. Zn(2+) is bound at residue histidine 99. The region spanning 227 to 284 (MQTRLPTILPTTNFTDCLTVMNEGRMGVALVMENEQLKGIITDGDIRRALTANGAGTL) is the CBS 1 domain. Residues 292 to 337 (MTSSPKTIHQDEFLSKAEDFMKAKKIHSLVVVNDENHVVGLVEFSS) enclose the CBS 2 domain.

This sequence belongs to the SIS family. GutQ/KpsF subfamily.

The catalysed reaction is D-arabinose 5-phosphate = D-ribulose 5-phosphate. In terms of biological role, catalyzes the reversible aldol-ketol isomerization between D-ribulose 5-phosphate (Ru5P) and D-arabinose 5-phosphate (A5P). This chain is Probable arabinose 5-phosphate isomerase, found in Haemophilus influenzae (strain ATCC 51907 / DSM 11121 / KW20 / Rd).